The chain runs to 200 residues: 3-isopropylmalate dehydratase small subunit (200 aa).

It belongs to the LeuD family. LeuD type 1 subfamily. In terms of assembly, heterodimer of LeuC and LeuD.

The catalysed reaction is (2R,3S)-3-isopropylmalate = (2S)-2-isopropylmalate. The protein operates within amino-acid biosynthesis; L-leucine biosynthesis; L-leucine from 3-methyl-2-oxobutanoate: step 2/4. In terms of biological role, catalyzes the isomerization between 2-isopropylmalate and 3-isopropylmalate, via the formation of 2-isopropylmaleate. This is 3-isopropylmalate dehydratase small subunit from Methylobacterium radiotolerans (strain ATCC 27329 / DSM 1819 / JCM 2831 / NBRC 15690 / NCIMB 10815 / 0-1).